Reading from the N-terminus, the 478-residue chain is 7-dehydrocholesterol reductase (478 aa).

A disordered region spans residues 1–28 (MMASDRVRKRHKGSANGAQTVEKEPSKE). A run of 6 helical transmembrane segments spans residues 43-63 (LSGVILLLCFAPFLVSFFIMA), 97-117 (WAAAKIYAIWVTFQVVLYMCV), 180-200 (WIPLLWCTNILGYAVSTFAFI), 269-289 (VTNSMILVNVLQAVYVVDFFW), 309-329 (LGWGDCVWLPFLYTLQGLYLV), and 333-353 (IQLSTPHAAGVLILGLVGYYI). NADP(+) contacts are provided by residues Lys361, Arg365, Met398, Trp403, and 410 to 411 (NY). A helical membrane pass occupies residues 424 to 444 (ACGGNHLLPYFYIIYMTILLV). NADP(+) is bound by residues Asp450, 454-458 (CSNKY), and Tyr465.

It belongs to the ERG4/ERG24 family.

The protein localises to the endoplasmic reticulum membrane. It catalyses the reaction cholesterol + NADP(+) = 7-dehydrocholesterol + NADPH + H(+). It carries out the reaction 7-dehydrodesmosterol + NADPH + H(+) = desmosterol + NADP(+). It participates in steroid biosynthesis; cholesterol biosynthesis. Its function is as follows. Catalyzes the last step of the cholesterol synthesis pathway, which transforms cholesta-5,7-dien-3beta-ol (7-dehydrocholesterol,7-DHC) into cholesterol by reducing the C7-C8 double bond of its sterol core. Can also metabolize cholesta-5,7,24-trien-3beta-ol (7-dehydrodemosterol, 7-DHD) to desmosterol, which is then metabolized by the Delta(24)-sterol reductase (DHCR24) to cholesterol. Modulates ferroptosis (a form of regulated cell death driven by iron-dependent lipid peroxidation) through the metabolic breakdown of the anti-ferroptotic metabolites 7-DHC and 7-DHD which, when accumulated, divert the propagation of peroxyl radical-mediated damage from phospholipid components to its sterol core, protecting plasma and mitochondrial membranes from phospholipid autoxidation. The protein is 7-dehydrocholesterol reductase (dhcr7) of Danio rerio (Zebrafish).